A 222-amino-acid chain; its full sequence is GTP-binding nuclear protein Ran-4 (222 aa).

Residues 10–174 form the Small GTPase Ran-type domain; the sequence is DLPTFKLLIV…LYLARRIAGD (165 aa). GTP is bound at residue 21–28; sequence DGGTGKTT. The interval 40–48 is switch-I; the sequence is HNTEPTLGV. GTP-binding positions include Gly71, 125 to 128, and 153 to 155; these read NKVD and SAK. The segment at 71–87 is switch-II; that stretch reads GQEKYSGLKDAYYIHGQ.

Belongs to the small GTPase superfamily. Ran family. In terms of assembly, found in a nuclear export complex with RanGTP, exportin and pre-miRNA.

It localises to the nucleus. Functionally, GTP-binding protein involved in nucleocytoplasmic transport. Required for the import of protein into the nucleus and also for RNA export. Involved in chromatin condensation and control of cell cycle. The protein is GTP-binding nuclear protein Ran-4 (RAN4) of Arabidopsis thaliana (Mouse-ear cress).